The following is a 494-amino-acid chain: UDP-N-acetylmuramoyl-L-alanyl-D-glutamate--L-lysine ligase (494 aa).

Ser30 is a UDP-N-acetyl-alpha-D-muramoyl-L-alanyl-D-glutamate binding site. 110 to 116 (GTNGKTS) contributes to the ATP binding site. Residues 152–153 (TT), Ser179, and Arg187 each bind UDP-N-acetyl-alpha-D-muramoyl-L-alanyl-D-glutamate. Lys219 is modified (N6-carboxylysine). Residues 406–409 (DNPA) carry the L-lysine recognition motif motif.

It belongs to the MurCDEF family. MurE subfamily. Post-translationally, carboxylation is probably crucial for Mg(2+) binding and, consequently, for the gamma-phosphate positioning of ATP.

Its subcellular location is the cytoplasm. It catalyses the reaction UDP-N-acetyl-alpha-D-muramoyl-L-alanyl-D-glutamate + L-lysine + ATP = UDP-N-acetyl-alpha-D-muramoyl-L-alanyl-gamma-D-glutamyl-L-lysine + ADP + phosphate + H(+). Its pathway is cell wall biogenesis; peptidoglycan biosynthesis. Functionally, catalyzes the addition of L-lysine to the nucleotide precursor UDP-N-acetylmuramoyl-L-alanyl-D-glutamate (UMAG) in the biosynthesis of bacterial cell-wall peptidoglycan. The polypeptide is UDP-N-acetylmuramoyl-L-alanyl-D-glutamate--L-lysine ligase (Staphylococcus aureus (strain Mu3 / ATCC 700698)).